We begin with the raw amino-acid sequence, 255 residues long: Small ribosomal subunit protein uS3c (255 aa).

One can recognise a KH type-2 domain in the interval 51–124 (IRESSNTSYG…NKNQNKNTGQ (74 aa)). Residues 96 to 121 (EKNRDKNKSNKNSALDQSVNKNQNKN) form a disordered region. The span at 108 to 121 (SALDQSVNKNQNKN) shows a compositional bias: polar residues.

It belongs to the universal ribosomal protein uS3 family. In terms of assembly, part of the 30S ribosomal subunit.

It localises to the plastid. The protein resides in the chloroplast. This chain is Small ribosomal subunit protein uS3c (rps3), found in Chaetosphaeridium globosum (Charophycean green alga).